A 417-amino-acid polypeptide reads, in one-letter code: Tol-Pal system protein TolB (417 aa).

Residues 1–16 (MRYLWLFLIHTIGLFA) form the signal peptide.

It belongs to the TolB family. The Tol-Pal system is composed of five core proteins: the inner membrane proteins TolA, TolQ and TolR, the periplasmic protein TolB and the outer membrane protein Pal. They form a network linking the inner and outer membranes and the peptidoglycan layer.

It localises to the periplasm. In terms of biological role, part of the Tol-Pal system, which plays a role in outer membrane invagination during cell division and is important for maintaining outer membrane integrity. The chain is Tol-Pal system protein TolB from Helicobacter pylori (strain ATCC 700392 / 26695) (Campylobacter pylori).